A 376-amino-acid chain; its full sequence is Chaperone protein DnaJ (376 aa).

One can recognise a J domain in the interval 5–70; that stretch reads DYYEVLGVAR…NKRRAYDAHG (66 aa). A CR-type zinc finger spans residues 132–209; it reads GIERRIEIPT…CHGAGRVEEN (78 aa). Zn(2+) is bound by residues C145, C148, C161, C164, C183, C186, C197, and C200. 4 CXXCXGXG motif repeats span residues 145 to 152, 161 to 168, 183 to 190, and 197 to 204; these read CVSCHGSG, CGTCHGRG, CPHCDGRG, and CKTCHGAG.

The protein belongs to the DnaJ family. Homodimer. Zn(2+) serves as cofactor.

Its subcellular location is the cytoplasm. Functionally, participates actively in the response to hyperosmotic and heat shock by preventing the aggregation of stress-denatured proteins and by disaggregating proteins, also in an autonomous, DnaK-independent fashion. Unfolded proteins bind initially to DnaJ; upon interaction with the DnaJ-bound protein, DnaK hydrolyzes its bound ATP, resulting in the formation of a stable complex. GrpE releases ADP from DnaK; ATP binding to DnaK triggers the release of the substrate protein, thus completing the reaction cycle. Several rounds of ATP-dependent interactions between DnaJ, DnaK and GrpE are required for fully efficient folding. Also involved, together with DnaK and GrpE, in the DNA replication of plasmids through activation of initiation proteins. The polypeptide is Chaperone protein DnaJ (Xanthomonas oryzae pv. oryzae (strain PXO99A)).